A 246-amino-acid chain; its full sequence is Major prion protein (246 aa).

A signal peptide spans 1–15 (MLVLFVATWSDLGLC). Residues 16-223 (KKRPKPGGWN…ESQAYYQRGS (208 aa)) form an interaction with GRB2, ERI3 and SYN1 region. A disordered region spans residues 18–102 (RPKPGGWNTG…HKPSKPKTSM (85 aa)). Repeat copies occupy residues 44–52 (PQGGGGWGQ), 53–60 (PHGGGWGQ), 61–68 (PHGGGWGQ), 69–76 (PHGGGWGQ), and 77–84 (PHGGGWGQ). Positions 44-84 (PQGGGGWGQPHGGGWGQPHGGGWGQPHGGGWGQPHGGGWGQ) are 5 X 8 AA tandem repeats of P-H-G-G-G-W-G-Q. Over residues 45–88 (QGGGGWGQPHGGGWGQPHGGGWGQPHGGGWGQPHGGGWGQGGGT) the composition is skewed to gly residues. Cu(2+) is bound by residues His54, Gly55, Gly56, His62, Gly63, Gly64, His70, Gly71, Gly72, His78, Gly79, and Gly80. The span at 91 to 102 (QWHKPSKPKTSM) shows a compositional bias: basic residues. Cysteines 172 and 207 form a disulfide. Asn174 and Asn190 each carry an N-linked (GlcNAc...) asparagine glycan. Ser223 is lipidated: GPI-anchor amidated serine. Positions 224–246 (SMVLFSSPPVILLISFLIFLIVG) are cleaved as a propeptide — removed in mature form.

The protein belongs to the prion family. As to quaternary structure, monomer and homodimer. Has a tendency to aggregate into amyloid fibrils containing a cross-beta spine, formed by a steric zipper of superposed beta-strands. Soluble oligomers may represent an intermediate stage on the path to fibril formation. Copper binding may promote oligomerization. Interacts with GRB2, APP, ERI3/PRNPIP and SYN1. Mislocalized cytosolically exposed PrP interacts with MGRN1; this interaction alters MGRN1 subcellular location and causes lysosomal enlargement. Interacts with KIAA1191.

It is found in the cell membrane. It localises to the golgi apparatus. In terms of biological role, its primary physiological function is unclear. Has cytoprotective activity against internal or environmental stresses. May play a role in neuronal development and synaptic plasticity. May be required for neuronal myelin sheath maintenance. May play a role in iron uptake and iron homeostasis. Soluble oligomers are toxic to cultured neuroblastoma cells and induce apoptosis (in vitro). Association with GPC1 (via its heparan sulfate chains) targets PRNP to lipid rafts. Also provides Cu(2+) or Zn(2+) for the ascorbate-mediated GPC1 deaminase degradation of its heparan sulfate side chains. The sequence is that of Major prion protein (PRNP) from Cercopithecus mona (Mona monkey).